Consider the following 170-residue polypeptide: Large ribosomal subunit protein uL11 (170 aa).

This sequence belongs to the universal ribosomal protein uL11 family. Part of the ribosomal stalk of the 50S ribosomal subunit. Interacts with L10 and the large rRNA to form the base of the stalk. L10 forms an elongated spine to which L12 dimers bind in a sequential fashion forming a multimeric L10(L12)X complex.

Functionally, forms part of the ribosomal stalk which helps the ribosome interact with GTP-bound translation factors. The chain is Large ribosomal subunit protein uL11 from Saccharolobus islandicus (strain M.14.25 / Kamchatka #1) (Sulfolobus islandicus).